Consider the following 413-residue polypeptide: uncharacterized protein (413 aa).

This is an uncharacterized protein from Mycobacterium tuberculosis (strain CDC 1551 / Oshkosh).